A 92-amino-acid polypeptide reads, in one-letter code: Protein S100-A5 (92 aa).

2 EF-hand domains span residues 12-47 (MVTTFHKYSGREGSKLTLSRKELKELIKKELCLGEM) and 47-82 (MKESSIDDLMKSLDKNSDQEIDFKEYSVFLTMLCMA). Residues Thr-28, Glu-33, Asp-60, Asn-62, Asp-64, Glu-66, and Glu-71 each coordinate Ca(2+).

Belongs to the S-100 family. As to quaternary structure, homodimer.

Binds calcium, zinc and copper. One subunit can simultaneously bind 2 calcium ions or 2 copper ions plus 1 zinc ion. Calcium and copper ions compete for the same binding sites. This Homo sapiens (Human) protein is Protein S100-A5 (S100A5).